The sequence spans 1265 residues: 1-phosphatidylinositol 4,5-bisphosphate phosphodiesterase gamma-2 (1265 aa).

Positions 20–131 (RALELGTVMT…WLSGLKILHQ (112 aa)) constitute a PH domain. A PI-PLC X-box domain is found at 312–456 (QDMNNPLSHY…LREKIIIKHK (145 aa)). Residues H327 and H372 contribute to the active site. SH2 domains are found at residues 532–635 (WFHK…TDPV) and 646–735 (WYYD…RYPV). Y753 and Y759 each carry phosphotyrosine; by BTK. Positions 769–829 (MPQRTVKALY…PSNYVEDISA (61 aa)) constitute an SH3 domain. The PI-PLC Y-box domain occupies 930 to 1044 (LSDLVVYCKP…GYVLQPESMR (115 aa)). The C2 domain occupies 1038 to 1169 (LQPESMRSEK…SGFRSVPLKN (132 aa)). Residue Y1197 is modified to Phosphotyrosine; by BTK. Residues Y1217 and Y1245 each carry the phosphotyrosine modification.

In terms of assembly, part of a complex composed of EEIG1, TNFRSF11A/RANK, PLCG2, GAB2, TEC and BTK; complex formation increases in the presence of TNFSF11/RANKL. Interacts (via SH2 domain) with CSF1R (tyrosine phosphorylated). Interacts constitutively with THEMIS2. Requires Ca(2+) as cofactor. In terms of processing, phosphorylated on tyrosine residues by CSF1R. Phosphorylated on tyrosine residues by BTK and SYK; upon ligand-induced activation of a variety of growth factor receptors and immune system receptors. Phosphorylation leads to increased phospholipase activity.

Its subcellular location is the membrane raft. It carries out the reaction a 1,2-diacyl-sn-glycero-3-phospho-(1D-myo-inositol-4,5-bisphosphate) + H2O = 1D-myo-inositol 1,4,5-trisphosphate + a 1,2-diacyl-sn-glycerol + H(+). Functionally, the production of the second messenger molecules diacylglycerol (DAG) and inositol 1,4,5-trisphosphate (IP3) is mediated by activated phosphatidylinositol-specific phospholipase C enzymes. It is a crucial enzyme in transmembrane signaling. The sequence is that of 1-phosphatidylinositol 4,5-bisphosphate phosphodiesterase gamma-2 from Rattus norvegicus (Rat).